Here is a 1573-residue protein sequence, read N- to C-terminus: Mediator of RNA polymerase II transcription subunit 1 (1573 aa).

An LXXLL motif 1 motif is present at residues 588 to 592 (LTSLL). 3 disordered regions span residues 595–691 (TSNS…EDDF), 774–883 (SKLP…FKDF), and 928–1564 (LGGP…GDDD). Positions 606 to 617 (PTPPQHTPPPAS) are enriched in pro residues. The short motif at 629 to 633 (LMNLL) is the LXXLL motif 2 element. Positions 651–668 (ERQNSSGSPRTELGSSAS) are enriched in polar residues. A compositionally biased stretch (basic and acidic residues) spans 678 to 691 (TGTEKMKNQTEDDF). Composition is skewed to polar residues over residues 791–804 (RDSS…STLF), 835–864 (GSPN…QSGF), and 934–944 (QETQSRSQSPL). Basic and acidic residues predominate over residues 949–961 (LGKDRPQKQKVKE). Over residues 963–973 (GNGGGAGGGLS) the composition is skewed to gly residues. Low complexity-rich tracts occupy residues 1025–1038 (PTST…GTSG), 1053–1085 (KITI…SSSS), 1092–1116 (SSLS…MKIG), 1124–1143 (SGQS…SMGK), and 1155–1164 (SSNVNNSSGS). Over residues 1176-1193 (MNPSLSKPNISPSHSRPS) the composition is skewed to polar residues. Low complexity predominate over residues 1226 to 1277 (LSGSGSNSTTKSSSGLVSSGSLTQKPNSSSSSSSSSSSSSSSSSSSSSSFSS). Over residues 1278-1290 (GVSQNLHSSSKGK) the composition is skewed to polar residues. Residues 1350–1362 (PTKREKGEKDKSK) show a composition bias toward basic and acidic residues. Composition is skewed to polar residues over residues 1420–1435 (SQMQ…SGST) and 1443–1457 (PSHN…QALD). A compositionally biased stretch (low complexity) spans 1461–1471 (ESGSSSIAEKS). A compositionally biased stretch (basic residues) spans 1496-1505 (KHKKHKKEKK). Over residues 1506–1518 (RLKDKDRDREKKK) the composition is skewed to basic and acidic residues.

Belongs to the Mediator complex subunit 1 family. As to quaternary structure, component of the Mediator complex.

Its subcellular location is the nucleus. Functionally, component of the Mediator complex, a coactivator involved in the regulated transcription of nearly all RNA polymerase II-dependent genes. Mediator functions as a bridge to convey information from gene-specific regulatory proteins to the basal RNA polymerase II transcription machinery. Mediator is recruited to promoters by direct interactions with regulatory proteins and serves as a scaffold for the assembly of a functional preinitiation complex with RNA polymerase II and the general transcription factors. The sequence is that of Mediator of RNA polymerase II transcription subunit 1 (med1) from Xenopus tropicalis (Western clawed frog).